Reading from the N-terminus, the 284-residue chain is AA14 family lytic polysaccharide monooxygenase B (284 aa).

Residues 1–20 form the signal peptide; that stretch reads MGYLSKLVTSVVFAIPLASA. Residues Asn42, Asn96, Asn142, and Asn183 are each glycosylated (N-linked (GlcNAc...) asparagine). Cys197 and Cys218 are disulfide-bonded.

It belongs to the polysaccharide monooxygenase AA14 family. Cu(2+) serves as cofactor.

Its subcellular location is the secreted. Functionally, lytic polysaccharide monooxygenase (LPMO) that plays decomposes some specific network structures formed between cellulose and hemicellulose in the plant cell walls. Catalysis by LPMOs requires the reduction of the active-site copper from Cu(II) to Cu(I) by a reducing agent and H(2)O(2) or O(2) as a cosubstrate. This is AA14 family lytic polysaccharide monooxygenase B from Talaromyces rugulosus (Penicillium rugulosum).